Reading from the N-terminus, the 126-residue chain is Protein ApaG (126 aa).

The ApaG domain maps to 2–126 (SDPRYQVDVS…FRLAVPGALH (125 aa)).

This chain is Protein ApaG, found in Pseudomonas fluorescens (strain ATCC BAA-477 / NRRL B-23932 / Pf-5).